The chain runs to 159 residues: 2-C-methyl-D-erythritol 2,4-cyclodiphosphate synthase (159 aa).

Residues Asp-10 and His-12 each contribute to the a divalent metal cation site. 4-CDP-2-C-methyl-D-erythritol 2-phosphate contacts are provided by residues 10 to 12 (DVH) and 36 to 37 (HS). His-44 contributes to the a divalent metal cation binding site. 4-CDP-2-C-methyl-D-erythritol 2-phosphate-binding positions include 58-60 (DIG), 63-67 (FPDTD), 102-108 (AQAPKMA), 134-137 (TTTE), Phe-141, and Arg-144.

Belongs to the IspF family. As to quaternary structure, homotrimer. It depends on a divalent metal cation as a cofactor.

The enzyme catalyses 4-CDP-2-C-methyl-D-erythritol 2-phosphate = 2-C-methyl-D-erythritol 2,4-cyclic diphosphate + CMP. Its pathway is isoprenoid biosynthesis; isopentenyl diphosphate biosynthesis via DXP pathway; isopentenyl diphosphate from 1-deoxy-D-xylulose 5-phosphate: step 4/6. Functionally, involved in the biosynthesis of isopentenyl diphosphate (IPP) and dimethylallyl diphosphate (DMAPP), two major building blocks of isoprenoid compounds. Catalyzes the conversion of 4-diphosphocytidyl-2-C-methyl-D-erythritol 2-phosphate (CDP-ME2P) to 2-C-methyl-D-erythritol 2,4-cyclodiphosphate (ME-CPP) with a corresponding release of cytidine 5-monophosphate (CMP). This chain is 2-C-methyl-D-erythritol 2,4-cyclodiphosphate synthase, found in Shewanella frigidimarina (strain NCIMB 400).